A 418-amino-acid chain; its full sequence is Nucleoside permease NupC (418 aa).

The next 9 membrane-spanning stretches (helical) occupy residues 2 to 22, 34 to 54, 93 to 113, 174 to 194, 198 to 218, 264 to 284, 292 to 314, 354 to 374, and 395 to 415; these read IFSS…AWVF, IVSA…VPLG, IGGF…ASLI, IFAV…AGYA, IPLP…LLFA, LLAF…VGGF, LGLI…WSQA, AIIT…MLIG, and VLVG…FIGL.

The protein belongs to the concentrative nucleoside transporter (CNT) (TC 2.A.41) family.

It localises to the cell inner membrane. Functionally, involved in purine nucleosides uptake. Could also be involved in uptake of nucleobases. This is Nucleoside permease NupC from Helicobacter pylori (strain ATCC 700392 / 26695) (Campylobacter pylori).